We begin with the raw amino-acid sequence, 398 residues long: S-adenosylmethionine synthase (398 aa).

136 to 141 serves as a coordination point for ATP; sequence GTGSSD.

This sequence belongs to the AdoMet synthase 2 family. Mg(2+) serves as cofactor.

It catalyses the reaction L-methionine + ATP + H2O = S-adenosyl-L-methionine + phosphate + diphosphate. Its pathway is amino-acid biosynthesis; S-adenosyl-L-methionine biosynthesis; S-adenosyl-L-methionine from L-methionine: step 1/1. In terms of biological role, catalyzes the formation of S-adenosylmethionine from methionine and ATP. The polypeptide is S-adenosylmethionine synthase (Methanosarcina barkeri (strain Fusaro / DSM 804)).